A 222-amino-acid chain; its full sequence is Sororin-like protein (222 aa).

The segment at 1 to 189 is disordered; it reads MEAPRSVGGR…VKQEKEDPVS (189 aa). Residues 24-33 are compositionally biased toward low complexity; the sequence is SRSSQQSSSS. The segment covering 47–60 has biased composition (basic and acidic residues); the sequence is RLVEQTTLKEKPKD. A compositionally biased stretch (low complexity) spans 88–105; that stretch reads ADLASPASAPSRPQTSRS. The Nuclear localization signal motif lies at 155–162; that stretch reads GKKTRQAS. The segment covering 167 to 179 has biased composition (basic residues); the sequence is KTLKVAPKKRQRT. The C-terminal Sororin domain stretch occupies residues 192–214; sequence CQDYIEKQKAYFAEIDAFELPVE.

Belongs to the sororin family.

Its subcellular location is the nucleus. Its function is as follows. Regulator of sister chromatid cohesion in mitosis stabilizing cohesin complex association with chromatin. Antagonizes the action of WAPL proteins (WAPL1 and WAPL2) which stimulates cohesin dissociation from chromatin, particularly during somatic division in root cells and meiocytes during anaphase I. Required for centromeric sister chromatid cohesion during male meiosis (microsporogenesis). Cohesion ensures that chromosome partitioning is accurate in dividing cells and may play an important role in DNA repair. This chain is Sororin-like protein, found in Arabidopsis thaliana (Mouse-ear cress).